Here is a 111-residue protein sequence, read N- to C-terminus: Type III endosome membrane protein TEMP (111 aa).

The Extracellular portion of the chain corresponds to Met-1 to Arg-27. The N-linked (GlcNAc...) asparagine glycan is linked to Asn-5. The chain crosses the membrane as a helical; Signal-anchor for type III membrane protein span at residues Ala-28–Leu-48. Over Ala-49–Leu-111 the chain is Cytoplasmic. The disordered stretch occupies residues His-64–Leu-111. Residues Gly-79–Ile-88 show a composition bias toward acidic residues.

Expressed in stomach, kidney, large and small intestine and kidney.

The protein resides in the membrane. It localises to the early endosome. Its subcellular location is the recycling endosome. The protein localises to the cell membrane. Functionally, may be involved in membrane trafficking between endosomes and plasma membrane. This is Type III endosome membrane protein TEMP from Mus musculus (Mouse).